The sequence spans 969 residues: UvrABC system protein A (969 aa).

Residue Gly32–Ser39 coordinates ATP. A C4-type zinc finger spans residues Cys258–Cys286. ABC transporter domains follow at residues Trp316–Ile599 and Val619–Ala948. Residue Gly652–Ser659 coordinates ATP. Residues Cys751–Cys777 form a C4-type zinc finger.

It belongs to the ABC transporter superfamily. UvrA family. Forms a heterotetramer with UvrB during the search for lesions.

The protein localises to the cytoplasm. Its function is as follows. The UvrABC repair system catalyzes the recognition and processing of DNA lesions. UvrA is an ATPase and a DNA-binding protein. A damage recognition complex composed of 2 UvrA and 2 UvrB subunits scans DNA for abnormalities. When the presence of a lesion has been verified by UvrB, the UvrA molecules dissociate. This chain is UvrABC system protein A, found in Mycobacterium leprae (strain TN).